The chain runs to 308 residues: Aspartate carbamoyltransferase catalytic subunit (308 aa).

Positions 58 and 59 each coordinate carbamoyl phosphate. Lys-86 is a binding site for L-aspartate. 3 residues coordinate carbamoyl phosphate: Arg-108, His-136, and Gln-139. Positions 169 and 227 each coordinate L-aspartate. Carbamoyl phosphate is bound by residues Gly-268 and Pro-269.

Belongs to the aspartate/ornithine carbamoyltransferase superfamily. ATCase family. As to quaternary structure, heterododecamer (2C3:3R2) of six catalytic PyrB chains organized as two trimers (C3), and six regulatory PyrI chains organized as three dimers (R2).

It carries out the reaction carbamoyl phosphate + L-aspartate = N-carbamoyl-L-aspartate + phosphate + H(+). It functions in the pathway pyrimidine metabolism; UMP biosynthesis via de novo pathway; (S)-dihydroorotate from bicarbonate: step 2/3. Its function is as follows. Catalyzes the condensation of carbamoyl phosphate and aspartate to form carbamoyl aspartate and inorganic phosphate, the committed step in the de novo pyrimidine nucleotide biosynthesis pathway. In Chloroflexus aggregans (strain MD-66 / DSM 9485), this protein is Aspartate carbamoyltransferase catalytic subunit.